Consider the following 262-residue polypeptide: Aminoglycoside (3'') (9) adenylyltransferase (262 aa).

The enzyme catalyses streptomycin + ATP = 3''-O-adenylylstreptomycin + diphosphate. It carries out the reaction spectinomycin + ATP = 9-O-adenylylspectinomycin + diphosphate. In terms of biological role, mediates bacterial resistance to the antibiotics streptomycin and spectinomycin. This is Aminoglycoside (3'') (9) adenylyltransferase from Klebsiella pneumoniae.